The chain runs to 261 residues: Cytochrome c oxidase subunit 3 (261 aa).

Over 1–15 (MAHQAHSYHMVDPSP) the chain is Mitochondrial matrix. A helical transmembrane segment spans residues 16–34 (WPIFGATAALLTTSGLIMW). Over 35–40 (FHYNSL) the chain is Mitochondrial intermembrane. The helical transmembrane segment at 41-66 (YLLTLGLLSMFLVMIQWWRDIVREST) threads the bilayer. Over 67 to 72 (FQGHHT) the chain is Mitochondrial matrix. The helical transmembrane segment at 73 to 105 (PTVQKGLRYGMILFITSEAFFFLGFFWAFFHSS) threads the bilayer. Topologically, residues 106–128 (LAPTPELGAQWPPTGINPLNPLE) are mitochondrial intermembrane. The chain crosses the membrane as a helical span at residues 129-152 (VPLLNTAILLASGVTVTWAHHSIT). The Mitochondrial matrix portion of the chain corresponds to 153-155 (ESN). The chain crosses the membrane as a helical span at residues 156–183 (RKQAIHALSLTIILGFYFTALQAMEYHE). Residues 184-190 (ASFSIAD) lie on the Mitochondrial intermembrane side of the membrane. A helical membrane pass occupies residues 191 to 223 (GVYGSTFFVATGFHGLHVIIGSSFLTVCLLRLI). Over 224 to 232 (KFHFTTNHH) the chain is Mitochondrial matrix. Residues 233 to 256 (FGFEAAAWYWHFVDVIWLFLYMSI) traverse the membrane as a helical segment. Residues 257 to 261 (YWWGS) are Mitochondrial intermembrane-facing.

Belongs to the cytochrome c oxidase subunit 3 family. As to quaternary structure, component of the cytochrome c oxidase (complex IV, CIV), a multisubunit enzyme composed of 14 subunits. The complex is composed of a catalytic core of 3 subunits MT-CO1, MT-CO2 and MT-CO3, encoded in the mitochondrial DNA, and 11 supernumerary subunits COX4I, COX5A, COX5B, COX6A, COX6B, COX6C, COX7A, COX7B, COX7C, COX8 and NDUFA4, which are encoded in the nuclear genome. The complex exists as a monomer or a dimer and forms supercomplexes (SCs) in the inner mitochondrial membrane with NADH-ubiquinone oxidoreductase (complex I, CI) and ubiquinol-cytochrome c oxidoreductase (cytochrome b-c1 complex, complex III, CIII), resulting in different assemblies (supercomplex SCI(1)III(2)IV(1) and megacomplex MCI(2)III(2)IV(2)).

The protein localises to the mitochondrion inner membrane. The catalysed reaction is 4 Fe(II)-[cytochrome c] + O2 + 8 H(+)(in) = 4 Fe(III)-[cytochrome c] + 2 H2O + 4 H(+)(out). Component of the cytochrome c oxidase, the last enzyme in the mitochondrial electron transport chain which drives oxidative phosphorylation. The respiratory chain contains 3 multisubunit complexes succinate dehydrogenase (complex II, CII), ubiquinol-cytochrome c oxidoreductase (cytochrome b-c1 complex, complex III, CIII) and cytochrome c oxidase (complex IV, CIV), that cooperate to transfer electrons derived from NADH and succinate to molecular oxygen, creating an electrochemical gradient over the inner membrane that drives transmembrane transport and the ATP synthase. Cytochrome c oxidase is the component of the respiratory chain that catalyzes the reduction of oxygen to water. Electrons originating from reduced cytochrome c in the intermembrane space (IMS) are transferred via the dinuclear copper A center (CU(A)) of subunit 2 and heme A of subunit 1 to the active site in subunit 1, a binuclear center (BNC) formed by heme A3 and copper B (CU(B)). The BNC reduces molecular oxygen to 2 water molecules using 4 electrons from cytochrome c in the IMS and 4 protons from the mitochondrial matrix. The protein is Cytochrome c oxidase subunit 3 (MT-CO3) of Struthio camelus (Common ostrich).